A 248-amino-acid polypeptide reads, in one-letter code: 2,3-bisphosphoglycerate-dependent phosphoglycerate mutase (248 aa).

Substrate is bound by residues 8 to 15 (RHGESQWN), 21 to 22 (TG), Arg60, 87 to 90 (ERHY), Lys98, 114 to 115 (RR), and 183 to 184 (GN). The active-site Tele-phosphohistidine intermediate is the His9. Catalysis depends on Glu87, which acts as the Proton donor/acceptor.

It belongs to the phosphoglycerate mutase family. BPG-dependent PGAM subfamily. In terms of assembly, homodimer.

The enzyme catalyses (2R)-2-phosphoglycerate = (2R)-3-phosphoglycerate. The protein operates within carbohydrate degradation; glycolysis; pyruvate from D-glyceraldehyde 3-phosphate: step 3/5. Its function is as follows. Catalyzes the interconversion of 2-phosphoglycerate and 3-phosphoglycerate. The protein is 2,3-bisphosphoglycerate-dependent phosphoglycerate mutase of Teredinibacter turnerae (strain ATCC 39867 / T7901).